The primary structure comprises 380 residues: Alpha-N-acetylneuraminate alpha-2,8-sialyltransferase ST8SIA3 (380 aa).

The Cytoplasmic segment spans residues 1-9 (MRNCKMARV). A helical; Signal-anchor for type II membrane protein transmembrane segment spans residues 10–33 (ASVLGLVMLSVALLNLSLISYVSL). Residues 34 to 380 (KKENIFATPK…LTKLTLSHCA (347 aa)) are Lumenal-facing. N93 and N113 each carry an N-linked (GlcNAc...) asparagine glycan. 2 disulfides stabilise this stretch: C162–C313 and C176–C379. The CMP-N-acetyl-beta-neuraminate site is built by N167 and N190. N206 is a glycosylation site (N-linked (GlcNAc...) asparagine). Residues S300, T301, G302, W322, Y336, and H337 each coordinate CMP-N-acetyl-beta-neuraminate. H354 functions as the Proton donor/acceptor in the catalytic mechanism.

It belongs to the glycosyltransferase 29 family. As to quaternary structure, homodimer. Post-translationally, autopolysialylated.

Its subcellular location is the golgi apparatus membrane. The enzyme catalyses [N-acetyl-alpha-D-neuraminosyl-(2-&gt;8)](n) + CMP-N-acetyl-beta-neuraminate = [N-acetyl-alpha-D-neuraminosyl-(2-&gt;8)](n+1) + CMP + H(+). The catalysed reaction is alpha-Neu5Ac-(2-&gt;3)-beta-D-Gal-(1-&gt;4)-6S-D-GlcNAc + CMP-N-acetyl-beta-neuraminate = alpha-Neu5Ac-(2-&gt;8)-alpha-Neu5Ac-(2-&gt;3)-beta-D-Gal-(1-&gt;4)-6S-D-GlcNAc + CMP + H(+). It catalyses the reaction a ganglioside GM3 (d18:1(4E)) + CMP-N-acetyl-beta-neuraminate = a ganglioside GD3 (d18:1(4E)) + CMP + H(+). It carries out the reaction a ganglioside GM3 + CMP-N-acetyl-beta-neuraminate = a ganglioside GD3 + CMP + H(+). The enzyme catalyses an N-acetyl-alpha-neuraminyl-(2-&gt;3)-beta-D-galactosyl derivative + CMP-N-acetyl-beta-neuraminate = an N-acetyl-alpha-neuraminyl-(2-&gt;8)-N-acetyl-alpha-neuraminyl-(2-&gt;3)-beta-D-galactosyl derivative + CMP + H(+). The catalysed reaction is an N-acetyl-alpha-neuraminyl-(2-&gt;3)-beta-D-galactosyl-(1-&gt;4)-N-acetyl-beta-D-glucosaminyl derivative + CMP-N-acetyl-beta-neuraminate = an alpha-Neu5Ac-(2-&gt;8)-alpha-Neu5Ac-(2-&gt;3)-beta-D-Gal-(1-&gt;4)-beta-D-GlcNAc derivative + CMP + H(+). Its pathway is protein modification; protein glycosylation. Functionally, catalyzes the transfer of sialic acid from a CMP-linked sialic acid donor onto a terminal alpha-2,3-, alpha-2,6-, or alpha-2,8-linked sialic acid of an acceptor, such as N-linked oligosaccharides of glycoproteins and glycolipids through alpha-2,8-linkages. Forms oligosialic and polysialic acid on various sialylated N-acetyllactosamine oligosaccharides of glycoproteins, including FETUB N-glycans, a2-HS-glycoprotein (AHSG) and alpha 2,3-sialylated glycosphingolipids, such as alpha 2,3-sialylparagloboside and ganglioside GM3 and to a lesser extent NCAM1 N-glycans. However, it is much more specific to N-linked oligosaccharides of glycoproteins than glycosphingolipids. 2,3-sialylparagloboside serves as the best acceptor substrate among the glycolipids. alpha-Neu5Ac-(2-&gt;8)-alpha-Neu5Ac-(2-&gt;3)-beta-D-Gal-(1-&gt;4)-6S-D-GlcNAc and monosialyl and disialyl N-acetyllactosamines are the best acceptor substrates among glycoproteins. May plays critical role in the striatum by mediating the formation of disialylated and trisialylated terminal glycotopes on N- and O-glycans of specific striatal proteins, regulating their distribution in lipid rafts, affecting their interaction with other binding partners, and subsequently modulating striatal functions. The sequence is that of Alpha-N-acetylneuraminate alpha-2,8-sialyltransferase ST8SIA3 from Pan troglodytes (Chimpanzee).